Consider the following 453-residue polypeptide: tRNA hydroxylation protein P (453 aa).

The protein belongs to the peptidase U32 family.

Functionally, involved in prephenate-dependent formation of 5-hydroxyuridine (ho5U) modification at position 34 in tRNAs, the first step in 5-carboxymethoxyuridine (cmo5U) biosynthesis. Involved differently in ho5U formation in each tRNA; tRNA(Leu3) and tRNA(Pro3) are major targets of TrhP. The chain is tRNA hydroxylation protein P from Escherichia coli (strain K12).